An 801-amino-acid polypeptide reads, in one-letter code: Phenylalanine--tRNA ligase beta subunit (801 aa).

In terms of domain architecture, tRNA-binding spans 39–148; that stretch reads AGSFTGVKVG…EDAVIGTDFR (110 aa). In terms of domain architecture, B5 spans 401-476; it reads PKPNKVALRR…RIYGYDNIPN (76 aa). D454, D460, E463, and E464 together coordinate Mg(2+). The 94-residue stretch at 707–800 folds into the FDX-ACB domain; the sequence is SKFPSNRRDI…VSEKFGAALR (94 aa).

The protein belongs to the phenylalanyl-tRNA synthetase beta subunit family. Type 1 subfamily. Tetramer of two alpha and two beta subunits. It depends on Mg(2+) as a cofactor.

Its subcellular location is the cytoplasm. The catalysed reaction is tRNA(Phe) + L-phenylalanine + ATP = L-phenylalanyl-tRNA(Phe) + AMP + diphosphate + H(+). The chain is Phenylalanine--tRNA ligase beta subunit from Vibrio parahaemolyticus serotype O3:K6 (strain RIMD 2210633).